A 334-amino-acid chain; its full sequence is N-acetyl-gamma-glutamyl-phosphate reductase (334 aa).

Residue Cys-154 is part of the active site.

Belongs to the NAGSA dehydrogenase family. Type 1 subfamily.

Its subcellular location is the cytoplasm. It carries out the reaction N-acetyl-L-glutamate 5-semialdehyde + phosphate + NADP(+) = N-acetyl-L-glutamyl 5-phosphate + NADPH + H(+). It functions in the pathway amino-acid biosynthesis; L-arginine biosynthesis; N(2)-acetyl-L-ornithine from L-glutamate: step 3/4. In terms of biological role, catalyzes the NADPH-dependent reduction of N-acetyl-5-glutamyl phosphate to yield N-acetyl-L-glutamate 5-semialdehyde. In Escherichia coli O6:H1 (strain CFT073 / ATCC 700928 / UPEC), this protein is N-acetyl-gamma-glutamyl-phosphate reductase.